Reading from the N-terminus, the 352-residue chain is UDP-3-O-acylglucosamine N-acyltransferase (352 aa).

Residue His257 is the Proton acceptor of the active site.

The protein belongs to the transferase hexapeptide repeat family. LpxD subfamily. As to quaternary structure, homotrimer.

The catalysed reaction is a UDP-3-O-[(3R)-3-hydroxyacyl]-alpha-D-glucosamine + a (3R)-hydroxyacyl-[ACP] = a UDP-2-N,3-O-bis[(3R)-3-hydroxyacyl]-alpha-D-glucosamine + holo-[ACP] + H(+). The protein operates within bacterial outer membrane biogenesis; LPS lipid A biosynthesis. Its function is as follows. Catalyzes the N-acylation of UDP-3-O-acylglucosamine using 3-hydroxyacyl-ACP as the acyl donor. Is involved in the biosynthesis of lipid A, a phosphorylated glycolipid that anchors the lipopolysaccharide to the outer membrane of the cell. This is UDP-3-O-acylglucosamine N-acyltransferase from Methylobacterium sp. (strain 4-46).